We begin with the raw amino-acid sequence, 545 residues long: Phenylalanine--tRNA ligase beta subunit (545 aa).

In terms of domain architecture, B5 spans 270–346; it reads LEPKERLLTT…KGYGYENIKV (77 aa). The Mg(2+) site is built by Asp324, Asp330, Glu333, and Asp334.

Belongs to the phenylalanyl-tRNA synthetase beta subunit family. Type 2 subfamily. Tetramer of two alpha and two beta subunits. It depends on Mg(2+) as a cofactor.

The protein localises to the cytoplasm. The enzyme catalyses tRNA(Phe) + L-phenylalanine + ATP = L-phenylalanyl-tRNA(Phe) + AMP + diphosphate + H(+). The chain is Phenylalanine--tRNA ligase beta subunit from Methanosarcina acetivorans (strain ATCC 35395 / DSM 2834 / JCM 12185 / C2A).